Consider the following 469-residue polypeptide: MGTVHARSLEPLPSSGTDFGALGEEAEFVEVEPEAKQEILENKDVVVQHVHFDGLGRTKDDIIICEIGEVFKAKNLIEVMRRSHEAREKLLRLGIFRQVDVLIDTCHGEDALPNGLDVTFEVTELRRLTGSYNTMVGNNEGSMVLGLKLPNLLGRAEKVTFQFSYGTKETSYGLSFFKPQPGNFERNFSVNLYKVTGQFPWSSLRETDRGVSAEYSFPLWKTSHTVKWEGVWRELGCLSRTASFAVRKESGHSLKSSLSHAMVIDSRNSSILPRRGALFKVNQELAGYTGGDVSFIKEDFELQLNKPLALDSVFSTSLWGGMLVPIGDKPSSIADRFYLGGPTSVRGFSMHSIGPQSEGDYLGGEAYWAGGLHLYTPLPFRPGQGGFGELFRTHFFLNAGNLCNLNYGEGPKAHIRKLAECIRWSYGAGVVLRLGNIARLELNYCIPMGVQGGDRICDGVQFGAGIRFL.

One can recognise a POTRA domain in the interval 45–125 (VVVQHVHFDG…LDVTFEVTEL (81 aa)). Lys-255 carries the post-translational modification N6-methyllysine.

It belongs to the SAM50/omp85 family. As to quaternary structure, associates with the mitochondrial contact site and cristae organizing system (MICOS) complex, composed of at least MICOS10/MIC10, CHCHD3/MIC19, CHCHD6/MIC25, APOOL/MIC27, IMMT/MIC60, APOO/MIC23/MIC26 and QIL1/MIC13. This complex was also known under the names MINOS or MitOS complex. The MICOS complex associates with mitochondrial outer membrane proteins SAMM50, MTX1 and MTX2 (together described as components of the mitochondrial outer membrane sorting assembly machinery (SAM) complex) and DNAJC11, mitochondrial inner membrane protein TMEM11 and with HSPA9. The MICOS and SAM complexes together with DNAJC11 are part of a large protein complex spanning both membranes termed the mitochondrial intermembrane space bridging (MIB) complex. Interacts with IMMT/MIC60. Interacts with CHCHD3/MIC19. Interacts with ARMC1. (Microbial infection) Interacts with parasite T.gondii RH strain MAF1b1; the interaction is probably indirect and results in the disruption of the MIB complex and the formation of SPOTs (structures positive for outer mitochondrial membrane (OMM)), a cellular response to OMM stress, which leads to the constitutive shedding of OMM vesicles.

It localises to the mitochondrion outer membrane. It is found in the cytoplasm. The protein localises to the mitochondrion. Plays a crucial role in the maintenance of the structure of mitochondrial cristae and the proper assembly of the mitochondrial respiratory chain complexes. Required for the assembly of TOMM40 into the TOM complex. This chain is Sorting and assembly machinery component 50 homolog (Samm50), found in Mus musculus (Mouse).